The chain runs to 666 residues: Semaphorin-7A (666 aa).

A disordered region spans residues 1-21 (MTPPPPGRAAPSAPRARVPGP). The first 44 residues, 1–44 (MTPPPPGRAAPSAPRARVPGPPARLGLPLRLRLLLLLWAAAASA), serve as a signal peptide directing secretion. A compositionally biased stretch (low complexity) spans 9–21 (AAPSAPRARVPGP). One can recognise a Sema domain in the interval 53–490 (RIFAVWKGHV…SQWEVSQVPL (438 aa)). Asn105 carries an N-linked (GlcNAc...) asparagine glycan. A disulfide bond links Cys120 and Cys126. Arg135 carries the asymmetric dimethylarginine modification. Cys143 and Cys152 are disulfide-bonded. Residues Asn157 and Asn258 are each glycosylated (N-linked (GlcNAc...) asparagine). 7 disulfides stabilise this stretch: Cys266–Cys366, Cys291–Cys335, Cys493–Cys511, Cys500–Cys541, Cys503–Cys518, Cys566–Cys613, and Cys587–Cys596. Residues 267-269 (RGD) form an interaction with integrins region. The short motif at 267 to 269 (RGD) is the Cell attachment site element. Residue Asn330 is glycosylated (N-linked (GlcNAc...) asparagine). The 86-residue stretch at 544-629 (PKPDKAPLQK…YFREAQHWQL (86 aa)) folds into the Ig-like C2-type domain. Asn602 carries an N-linked (GlcNAc...) asparagine glycan. The GPI-anchor amidated alanine moiety is linked to residue Ala648. Residues 649–666 (ASLWLGVLPTLTLGLLVH) constitute a propeptide, removed in mature form.

This sequence belongs to the semaphorin family. Interacts with ITGA1 and ITGB1. Interacts with PLXNC1. Detected in skin keratinocytes and on endothelial cells from skin blood vessels (at protein level). Expressed in fibroblasts, keratinocytes, melanocytes, placenta, testis, ovary, spleen, brain, spinal cord, lung, heart, adrenal gland, lymph nodes, thymus, intestine and kidney.

The protein resides in the cell membrane. In terms of biological role, plays an important role in integrin-mediated signaling and functions both in regulating cell migration and immune responses. Promotes formation of focal adhesion complexes, activation of the protein kinase PTK2/FAK1 and subsequent phosphorylation of MAPK1 and MAPK3. Promotes production of pro-inflammatory cytokines by monocytes and macrophages. Plays an important role in modulating inflammation and T-cell-mediated immune responses. Promotes axon growth in the embryonic olfactory bulb. Promotes attachment, spreading and dendrite outgrowth in melanocytes. This Homo sapiens (Human) protein is Semaphorin-7A (SEMA7A).